The primary structure comprises 190 residues: Potassium-transporting ATPase KdpC subunit (190 aa).

The helical transmembrane segment at T10–G30 threads the bilayer.

The protein belongs to the KdpC family. As to quaternary structure, the system is composed of three essential subunits: KdpA, KdpB and KdpC.

It is found in the cell inner membrane. Functionally, part of the high-affinity ATP-driven potassium transport (or Kdp) system, which catalyzes the hydrolysis of ATP coupled with the electrogenic transport of potassium into the cytoplasm. This subunit acts as a catalytic chaperone that increases the ATP-binding affinity of the ATP-hydrolyzing subunit KdpB by the formation of a transient KdpB/KdpC/ATP ternary complex. The protein is Potassium-transporting ATPase KdpC subunit of Shigella dysenteriae serotype 1 (strain Sd197).